The primary structure comprises 273 residues: MCLLALGFLLGILQPASGQFPRACASSESLLRKECCPLWAGDGSPCGELSGRGSCQEILLSRAPLGPQFPFTGVDDREDWPAVFYNRTCQCNSNFMGFNCGECRFGFSGPNCAERRMRMRRSIFQLSTREKNKFLAYLNLAKHTPSQDYVIATGTYAQMNNGLTPMFRNISVYDLFVWMHYYVSRDTLLGDASVWRDIDFAHEAPGFLPWHRLFLVLWEHEIQKITGDENFTIPYWDWRDAEGCDVCTDELMGDRHPTNPQLLSPASFFSSWQ.

The signal sequence occupies residues 1–18 (MCLLALGFLLGILQPASG). Residues asparagine 86 and asparagine 169 are each glycosylated (N-linked (GlcNAc...) asparagine). Cu cation contacts are provided by histidine 180, histidine 202, and histidine 211. An N-linked (GlcNAc...) asparagine glycan is attached at asparagine 230.

It belongs to the tyrosinase family. Requires Cu(2+) as cofactor.

It is found in the melanosome membrane. The catalysed reaction is 2 L-dopa + O2 = 2 L-dopaquinone + 2 H2O. It carries out the reaction L-tyrosine + O2 = L-dopaquinone + H2O. In terms of biological role, this is a copper-containing oxidase that functions in the formation of pigments such as melanins and other polyphenolic compounds. The chain is Tyrosinase (TYR) from Pelodiscus sinensis (Chinese softshell turtle).